The chain runs to 72 residues: Large ribosomal subunit protein uL30 (72 aa).

This sequence belongs to the universal ribosomal protein uL30 family. In terms of assembly, part of the 50S ribosomal subunit.

This is Large ribosomal subunit protein uL30 from Mycobacterium ulcerans (strain Agy99).